The sequence spans 166 residues: Phosphopantetheine adenylyltransferase (166 aa).

Ser-11 is a substrate binding site. Residues 11-12 (SF) and His-19 contribute to the ATP site. Positions 43, 80, and 94 each coordinate substrate. ATP-binding positions include 95–97 (GLR), Glu-105, and 130–136 (VRTITAT).

It belongs to the bacterial CoaD family. In terms of assembly, homohexamer. Mg(2+) serves as cofactor.

Its subcellular location is the cytoplasm. The catalysed reaction is (R)-4'-phosphopantetheine + ATP + H(+) = 3'-dephospho-CoA + diphosphate. It functions in the pathway cofactor biosynthesis; coenzyme A biosynthesis; CoA from (R)-pantothenate: step 4/5. Functionally, reversibly transfers an adenylyl group from ATP to 4'-phosphopantetheine, yielding dephospho-CoA (dPCoA) and pyrophosphate. The protein is Phosphopantetheine adenylyltransferase of Mesorhizobium japonicum (strain LMG 29417 / CECT 9101 / MAFF 303099) (Mesorhizobium loti (strain MAFF 303099)).